Reading from the N-terminus, the 249-residue chain is Deoxyribose-phosphate aldolase (249 aa).

Asp-109 functions as the Proton donor/acceptor in the catalytic mechanism. The active-site Schiff-base intermediate with acetaldehyde is Lys-171. The active-site Proton donor/acceptor is the Lys-200.

This sequence belongs to the DeoC/FbaB aldolase family. DeoC type 1 subfamily.

The protein localises to the cytoplasm. It carries out the reaction 2-deoxy-D-ribose 5-phosphate = D-glyceraldehyde 3-phosphate + acetaldehyde. Its pathway is carbohydrate degradation; 2-deoxy-D-ribose 1-phosphate degradation; D-glyceraldehyde 3-phosphate and acetaldehyde from 2-deoxy-alpha-D-ribose 1-phosphate: step 2/2. Functionally, catalyzes a reversible aldol reaction between acetaldehyde and D-glyceraldehyde 3-phosphate to generate 2-deoxy-D-ribose 5-phosphate. In Klebsiella pneumoniae subsp. pneumoniae (strain ATCC 700721 / MGH 78578), this protein is Deoxyribose-phosphate aldolase.